The following is a 342-amino-acid chain: Mitochondrial fission factor (342 aa).

Over 1–322 (MSKGTSSDTS…ENKERAKREM (322 aa)) the chain is Cytoplasmic. T115 carries the phosphothreonine modification. A Phosphoserine modification is found at A146. Position 149 is a phosphothreonine (R149). Residues K151, S155, S157, and S172 each carry the phosphoserine modification. A Phosphothreonine modification is found at T200. 4 positions are modified to phosphoserine: S202, S229, S233, and S295. Residues 291 to 322 (VDAASLRRQIIKLNRRLQLLEEENKERAKREM) are a coiled coil. Residues 323–340 (VMYSITVAFWLLNSWLWF) form a helical; Anchor for type IV membrane protein membrane-spanning segment. At 341 to 342 (RR) the chain is on the mitochondrial intermembrane side.

Belongs to the Tango11 family. In terms of assembly, homodimer. Interacts with DNM1L. Interacts with C11orf65/MFI; the interaction inhibits MFF interaction with DNM1L. In terms of tissue distribution, highly expressed in heart, kidney, liver, brain, muscle, and stomach.

It localises to the mitochondrion outer membrane. Its subcellular location is the peroxisome. It is found in the cytoplasmic vesicle. The protein resides in the secretory vesicle. The protein localises to the synaptic vesicle. In terms of biological role, plays a role in mitochondrial and peroxisomal fission. Promotes the recruitment and association of the fission mediator dynamin-related protein 1 (DNM1L) to the mitochondrial surface. May be involved in regulation of synaptic vesicle membrane dynamics by recruitment of DNM1L to clathrin-containing vesicles. This Homo sapiens (Human) protein is Mitochondrial fission factor (MFF).